Here is a 435-residue protein sequence, read N- to C-terminus: GPI-anchor transamidase component PIGU (435 aa).

At 2–3 (AA) the chain is on the cytoplasmic side. Residues 4–22 (PLVLVLVVAVTVRAALFRS) traverse the membrane as a helical segment. Residues 23 to 78 (SLAEFISERVEVVSPLSSWKRVVEGLSLLDLGVSPYSGAVFHETPLIIYLFHFLID) are Lumenal-facing. The helical transmembrane segment at 79 to 99 (YAELVFMITDALTAIALYFAI) threads the bilayer. Over 100 to 136 (QDFNKVVFKKQKLLLELDQYAPDVAELIRTPMEMRYI) the chain is Cytoplasmic. A run of 4 helical transmembrane segments spans residues 137 to 158 (PLKV…VAKS), 159 to 178 (TCAI…IKGS), 179 to 194 (AFLS…YQSL), and 195 to 205 (YPLTLFVPGLL). Over 206-222 (YLLQRQYIPVKMKSKAF) the chain is Cytoplasmic. A cardiolipin contacts are provided by lysine 216 and methionine 217. The chain crosses the membrane as a helical span at residues 223–244 (WIFSWEYAMMYVGSLVVIICLS). Residues 245–286 (FFLLSSWDFIPAVYGFILSVPDLTPNIGLFWYFFAEMFEHFS) lie on the Lumenal side of the membrane. A helical membrane pass occupies residues 287–306 (LFFVCVFQINVFFYTIPLAI). Over 307–311 (KLKEH) the chain is Cytoplasmic. An a cardiolipin-binding site is contributed by lysine 309. The next 2 membrane-spanning stretches (helical) occupy residues 312-331 (PIFF…SYPT) and 332-345 (VGDV…FPVW). The Cytoplasmic portion of the chain corresponds to 346–354 (NHLYRFLRN). Residues 355 to 372 (IFVLTCIIIVCSLLFPVL) traverse the membrane as a helical segment. Over 373–384 (WHLWIYAGSANS) the chain is Lumenal. Residues asparagine 383 and asparagine 385 each contribute to the a 2-acyl-6-[6-phosphoethanolamine-alpha-D-mannosyl-(1-&gt;2)-6-phosphoethanolamine-alpha-D-mannosyl-(1-&gt;6)-2-phosphoethanolamine-alpha-D-mannosyl-(1-&gt;4)-alpha-D-glucosaminyl]-1-(1-radyl,2-acyl-sn-glycero-3-phospho)-1D-myo-inositol site. Residues 385 to 406 (NFFYAITLTFNVGQILLISDYF) form a helical membrane-spanning segment. The Cytoplasmic portion of the chain corresponds to 407–435 (YAFLRREYYLTHGLYLTAKDGTEAMLVLK).

Belongs to the PIGU family. In terms of assembly, heteropentamer. Part of the GPI-anchor transamidase complex, consisting of PIGK, PIGT, PIGS, PIGU and GAA1.

Its subcellular location is the endoplasmic reticulum membrane. It functions in the pathway glycolipid biosynthesis; glycosylphosphatidylinositol-anchor biosynthesis. Component of the glycosylphosphatidylinositol-anchor (GPI-anchor) transamidase (GPI-T) complex that catalyzes the formation of the linkage between a proprotein and a GPI-anchor and participates in GPI anchored protein biosynthesis. Binds the lipid portion of GPI-anchor. May act as an organizer in the transmembrane layer to recruit other subunits, and thus is essential for assembly of the complex. The polypeptide is GPI-anchor transamidase component PIGU (Homo sapiens (Human)).